Reading from the N-terminus, the 965-residue chain is Chondroitin synthase (965 aa).

A galactosaminyltransferase; A1 domain region spans residues 132-418; it reads FTWYKNRKKS…IVKEKVPYIY (287 aa). Residues Pro158, Arg162, Asp189, Tyr218, Arg224, and 240–241 each bind UDP-N-acetyl-alpha-D-galactosamine; that span reads DC. Mn(2+) is bound at residue Asp242. Position 362–363 (362–363) interacts with UDP-N-acetyl-alpha-D-galactosamine; it reads ED. His387 is a Mn(2+) binding site. The segment at 419-683 is glucuronosyltransferase; A2 domain; the sequence is RKLLPIEDSH…ESRKYIFNKT (265 aa). Residues Tyr442, Asp470, and 518 to 521 contribute to the UDP-alpha-D-glucuronate site; that span reads QLDS. Mn(2+) is bound at residue Asp522. Residues His582 and 604–605 each bind UDP-alpha-D-glucuronate; that span reads AV. His632 lines the Mn(2+) pocket.

Belongs to the glycosyltransferase 2 family. CS/HAS subfamily. Mn(2+) is required as a cofactor.

It localises to the cell membrane. The catalysed reaction is 3-O-(beta-D-GlcA-(1-&gt;3)-beta-D-GalNAc-(1-&gt;4)-beta-D-GlcA-(1-&gt;3)-beta-D-Gal-(1-&gt;3)-beta-D-Gal-(1-&gt;4)-beta-D-Xyl)-L-seryl-[protein] + UDP-N-acetyl-alpha-D-galactosamine = 3-O-(beta-D-GalNAc-(1-&gt;4)-beta-D-GlcA-(1-&gt;3)-beta-D-GalNAc-(1-&gt;4)-beta-D-GlcA-(1-&gt;3)-beta-D-Gal-(1-&gt;3)-beta-D-Gal-(1-&gt;4)-beta-D-Xyl)-L-seryl-[protein] + UDP + H(+). It carries out the reaction 3-O-{beta-D-GlcA-(1-&gt;3)-[beta-D-GalNAc-(1-&gt;4)-beta-D-GlcA-(1-&gt;3)](n)-beta-D-GalNAc-(1-&gt;4)-beta-D-GlcA-(1-&gt;3)-beta-D-Gal-(1-&gt;3)-beta-D-Gal-(1-&gt;4)-beta-D-Xyl}-L-seryl-[protein] + UDP-N-acetyl-alpha-D-galactosamine = 3-O-{[beta-D-GalNAc-(1-&gt;4)-beta-D-GlcA-(1-&gt;3)](n+1)-beta-D-GalNAc-(1-&gt;4)-beta-D-GlcA-(1-&gt;3)-beta-D-Gal-(1-&gt;3)-beta-D-Gal-(1-&gt;4)-beta-D-Xyl}-L-seryl-[protein] + UDP + H(+). The enzyme catalyses 3-O-(beta-D-GalNAc-(1-&gt;4)-beta-D-GlcA-(1-&gt;3)-beta-D-Gal-(1-&gt;3)-beta-D-Gal-(1-&gt;4)-beta-D-Xyl)-L-seryl-[protein] + UDP-alpha-D-glucuronate = 3-O-(beta-D-GlcA-(1-&gt;3)-beta-D-GalNAc-(1-&gt;4)-beta-D-GlcA-(1-&gt;3)-beta-D-Gal-(1-&gt;3)-beta-D-Gal-(1-&gt;4)-beta-D-Xyl)-L-seryl-[protein] + UDP + H(+). It catalyses the reaction 3-O-{[beta-D-GalNAc-(1-&gt;4)-beta-D-GlcA-(1-&gt;3)](n)-beta-D-GalNAc-(1-&gt;4)-beta-D-GlcA-(1-&gt;3)-beta-D-Gal-(1-&gt;3)-beta-D-Gal-(1-&gt;4)-beta-D-Xyl}-L-seryl-[protein] + UDP-alpha-D-glucuronate = 3-O-{beta-D-GlcA-(1-&gt;3)-[beta-D-GalNAc-(1-&gt;4)-beta-D-GlcA-(1-&gt;3)](n)-beta-D-GalNAc-(1-&gt;4)-beta-D-GlcA-(1-&gt;3)-beta-D-Gal-(1-&gt;3)-beta-D-Gal-(1-&gt;4)-beta-D-Xyl}-L-seryl-[protein] + UDP + H(+). Glycosyltransferase that catalyzes elongation of chondroitin, a polysaccharide composed of a repeating disaccharide of N-acetylgalactosamine (GalNAc) and glucuronic acid (GlcUA) units, by alternatively transferring the GlcUA and GalNAc moiety from UDP-GlcUA and UDP-GalNAc to the non-reducing ends of the chondroitin chain. Each chondroitin unit has the composition beta-(1-&gt;4)-GlcUA-beta-(1-&gt;3)-GalNAc. This is Chondroitin synthase (fcbD) from Pasteurella multocida (strain Pm70).